Consider the following 198-residue polypeptide: Holliday junction branch migration complex subunit RuvA (198 aa).

A domain I region spans residues 1–61 (MYEYFEGIIQ…DNDQTLYGFE (61 aa)). The interval 62 to 140 (GAADKRTFNQ…TDGQPAAAAI (79 aa)) is domain II. The tract at residues 141 to 145 (APVAS) is flexible linker. A domain III region spans residues 146 to 198 (DVDSELADALAALVALGYPQRTVDGLTDTLKAFSAKTTDAYLREGLRLLSGKA).

Belongs to the RuvA family. Homotetramer. Forms an RuvA(8)-RuvB(12)-Holliday junction (HJ) complex. HJ DNA is sandwiched between 2 RuvA tetramers; dsDNA enters through RuvA and exits via RuvB. An RuvB hexamer assembles on each DNA strand where it exits the tetramer. Each RuvB hexamer is contacted by two RuvA subunits (via domain III) on 2 adjacent RuvB subunits; this complex drives branch migration. In the full resolvosome a probable DNA-RuvA(4)-RuvB(12)-RuvC(2) complex forms which resolves the HJ.

The protein localises to the cytoplasm. In terms of biological role, the RuvA-RuvB-RuvC complex processes Holliday junction (HJ) DNA during genetic recombination and DNA repair, while the RuvA-RuvB complex plays an important role in the rescue of blocked DNA replication forks via replication fork reversal (RFR). RuvA specifically binds to HJ cruciform DNA, conferring on it an open structure. The RuvB hexamer acts as an ATP-dependent pump, pulling dsDNA into and through the RuvAB complex. HJ branch migration allows RuvC to scan DNA until it finds its consensus sequence, where it cleaves and resolves the cruciform DNA. This is Holliday junction branch migration complex subunit RuvA from Lacticaseibacillus casei (strain BL23) (Lactobacillus casei).